The following is a 182-amino-acid chain: PTS system glucitol/sorbitol-specific EIIC component (182 aa).

Residues 1–182 enclose the PTS EIIC type-5 domain; sequence MDAIVYFAKG…IELSNQLKAN (182 aa). The next 3 helical transmembrane spans lie at 28–48, 63–83, and 139–159; these read GIIPKVLLLLVFMNSIIAFIG, VILAYGVLPFLSAFMLGNPMA, and TALGLRYLLVGLVMNFFAGWV.

The protein resides in the cell membrane. Functionally, the phosphoenolpyruvate-dependent sugar phosphotransferase system (PTS), a major carbohydrate active transport system, catalyzes the phosphorylation of incoming sugar substrates concomitant with their translocation across the cell membrane. The enzyme II complex composed of SrlA, SrlB and SrlE is involved in glucitol/sorbitol transport. The protein is PTS system glucitol/sorbitol-specific EIIC component (srlA) of Clostridium beijerinckii (strain ATCC 51743 / NCIMB 8052) (Clostridium acetobutylicum).